Consider the following 241-residue polypeptide: Polyol phosphate phosphatase PYP1 (241 aa).

Catalysis depends on Asp-9, which acts as the Nucleophile. Mg(2+) contacts are provided by Asp-9, Asp-11, and Asp-179. Asp-11 functions as the Proton donor in the catalytic mechanism.

The protein belongs to the HAD-like hydrolase superfamily. Mg(2+) is required as a cofactor.

The protein localises to the cytoplasm. The protein resides in the nucleus. The catalysed reaction is D-ribitol 5-phosphate + H2O = ribitol + phosphate. It carries out the reaction D-sorbitol 6-phosphate + H2O = D-sorbitol + phosphate. It catalyses the reaction sn-glycerol 1-phosphate + H2O = glycerol + phosphate. The enzyme catalyses D-erythrose 4-phosphate + H2O = D-erythrose + phosphate. In terms of biological role, hydrolyzes sugar alcohol (polyol) phosphates. Dephosphorylates a variety of substrates, including: sn-glycerol 1-phosphate (D-glycerol 3-phosphate), D-ribitol 5-phosphate, D-sorbitol 6-phosphate (D-glucitol 6-phosphate), and D-erythrose 4-phosphate. Prevents accumulation of toxic levels of polyol phosphates, which can impair glycolysis by inhibiting glucose-6-phosphate isomerase. In Saccharomyces cerevisiae (strain ATCC 204508 / S288c) (Baker's yeast), this protein is Polyol phosphate phosphatase PYP1.